The following is a 586-amino-acid chain: CTP synthase 2 (586 aa).

Residues 300-554 enclose the Glutamine amidotransferase type-1 domain; sequence SIALVGKYTK…LAATGNLNAH (255 aa). Active-site for GATase activity residues include C399, H526, and E528. S568, S571, and S574 each carry phosphoserine.

This sequence belongs to the CTP synthase family.

It catalyses the reaction UTP + L-glutamine + ATP + H2O = CTP + L-glutamate + ADP + phosphate + 2 H(+). The protein operates within pyrimidine metabolism; CTP biosynthesis via de novo pathway; CTP from UDP: step 2/2. Functionally, catalyzes the ATP-dependent amination of UTP to CTP with either L-glutamine or ammonia as the source of nitrogen. Constitutes the rate-limiting enzyme in the synthesis of cytosine nucleotides. The chain is CTP synthase 2 (Ctps2) from Mus musculus (Mouse).